We begin with the raw amino-acid sequence, 100 residues long: Urease subunit gamma (100 aa).

It belongs to the urease gamma subunit family. Heterotrimer of UreA (gamma), UreB (beta) and UreC (alpha) subunits. Three heterotrimers associate to form the active enzyme.

It localises to the cytoplasm. It catalyses the reaction urea + 2 H2O + H(+) = hydrogencarbonate + 2 NH4(+). It participates in nitrogen metabolism; urea degradation; CO(2) and NH(3) from urea (urease route): step 1/1. This chain is Urease subunit gamma, found in Mesorhizobium japonicum (strain LMG 29417 / CECT 9101 / MAFF 303099) (Mesorhizobium loti (strain MAFF 303099)).